The chain runs to 545 residues: tRNA-2-methylthio-N(6)-dimethylallyladenosine synthase (545 aa).

A disordered region spans residues 1 to 32 (MSSASPLARCCDEATPSAGPRAAQPPYHGPVT). The region spanning 58–174 (RTYQVRTYGC…LPTLLERARH (117 aa)) is the MTTase N-terminal domain. Residues cysteine 67, cysteine 103, cysteine 137, cysteine 211, cysteine 215, and cysteine 218 each contribute to the [4Fe-4S] cluster site. The Radical SAM core domain occupies 197-433 (RESAYAAWVS…IALQEQISLE (237 aa)). The TRAM domain maps to 436 to 504 (RALVGQAVEV…PHHLIADAGV (69 aa)).

The protein belongs to the methylthiotransferase family. MiaB subfamily. As to quaternary structure, monomer. The cofactor is [4Fe-4S] cluster.

Its subcellular location is the cytoplasm. The catalysed reaction is N(6)-dimethylallyladenosine(37) in tRNA + (sulfur carrier)-SH + AH2 + 2 S-adenosyl-L-methionine = 2-methylsulfanyl-N(6)-dimethylallyladenosine(37) in tRNA + (sulfur carrier)-H + 5'-deoxyadenosine + L-methionine + A + S-adenosyl-L-homocysteine + 2 H(+). In terms of biological role, catalyzes the methylthiolation of N6-(dimethylallyl)adenosine (i(6)A), leading to the formation of 2-methylthio-N6-(dimethylallyl)adenosine (ms(2)i(6)A) at position 37 in tRNAs that read codons beginning with uridine. This Mycobacterium bovis (strain BCG / Pasteur 1173P2) protein is tRNA-2-methylthio-N(6)-dimethylallyladenosine synthase.